We begin with the raw amino-acid sequence, 352 residues long: Biotin synthase (352 aa).

Residues 44 to 262 (NRVQVSTLLS…LAVARILMPQ (219 aa)) form the Radical SAM core domain. [4Fe-4S] cluster contacts are provided by C59, C63, and C66. The [2Fe-2S] cluster site is built by C103, C134, C194, and R266.

This sequence belongs to the radical SAM superfamily. Biotin synthase family. Homodimer. [4Fe-4S] cluster is required as a cofactor. It depends on [2Fe-2S] cluster as a cofactor.

It carries out the reaction (4R,5S)-dethiobiotin + (sulfur carrier)-SH + 2 reduced [2Fe-2S]-[ferredoxin] + 2 S-adenosyl-L-methionine = (sulfur carrier)-H + biotin + 2 5'-deoxyadenosine + 2 L-methionine + 2 oxidized [2Fe-2S]-[ferredoxin]. It participates in cofactor biosynthesis; biotin biosynthesis; biotin from 7,8-diaminononanoate: step 2/2. Catalyzes the conversion of dethiobiotin (DTB) to biotin by the insertion of a sulfur atom into dethiobiotin via a radical-based mechanism. This is Biotin synthase from Pseudomonas syringae pv. tomato (strain ATCC BAA-871 / DC3000).